The following is a 306-amino-acid chain: Acetylglutamate kinase (306 aa).

Substrate contacts are provided by residues 75-76, Arg-97, and Asn-197; that span reads GG.

This sequence belongs to the acetylglutamate kinase family. ArgB subfamily.

It is found in the cytoplasm. It catalyses the reaction N-acetyl-L-glutamate + ATP = N-acetyl-L-glutamyl 5-phosphate + ADP. Its pathway is amino-acid biosynthesis; L-arginine biosynthesis; N(2)-acetyl-L-ornithine from L-glutamate: step 2/4. Catalyzes the ATP-dependent phosphorylation of N-acetyl-L-glutamate. The chain is Acetylglutamate kinase from Streptomyces coelicolor (strain ATCC BAA-471 / A3(2) / M145).